Here is a 134-residue protein sequence, read N- to C-terminus: MGRDIIADIITSIRNADMDRKRAVRIASTNITENIVKILLREGFIENVRKHKETKKDFLVLTLRHRRNRKRSYRNFLNLKRISRPGLRIYSNYQRIPRILGGMGIVIISTSRGIMTDREARLERIGGEVLCYIW.

Belongs to the universal ribosomal protein uS8 family. Part of the 30S ribosomal subunit.

It localises to the plastid. Its subcellular location is the chloroplast. Its function is as follows. One of the primary rRNA binding proteins, it binds directly to 16S rRNA central domain where it helps coordinate assembly of the platform of the 30S subunit. In Daucus carota (Wild carrot), this protein is Small ribosomal subunit protein uS8c (rps8).